Here is a 375-residue protein sequence, read N- to C-terminus: Tubulinyl-Tyr carboxypeptidase 1 (375 aa).

Over residues 1–33 (MPGGKKVVPSGSSSASPNAAATTTAAAAAAAAA) the composition is skewed to low complexity. The segment at 1 to 69 (MPGGKKVVPS…EEDLRDGGVP (69 aa)) is disordered. Positions 53–63 (EEPEEEGEEDL) are enriched in acidic residues. Active-site residues include Cys-179, His-214, and Ser-231. Residues 309-375 (RDMRLKIGKG…PDLSGYQIRV (67 aa)) form a disordered region. The interval 329–375 (KKDVSSPQRAQSSPHRRNSRSERRPSGEKKPAEPKAMPDLSGYQIRV) is involved in heparin-binding and antiangiogenic activity. Residues 347–361 (SRSERRPSGEKKPAE) are compositionally biased toward basic and acidic residues.

Belongs to the transglutaminase-like superfamily. Vasohibin family. In terms of assembly, interacts with SVBP; interaction enhances VASH1 tyrosine carboxypeptidase activity. In terms of processing, ubiquitinated in vitro. Expressed at low level in proliferating endothelial cells at the sprouting front but highly expressed in nonproliferating endothelial cells in the termination zone.

It localises to the cytoplasm. Its subcellular location is the secreted. The catalysed reaction is C-terminal L-alpha-aminoacyl-L-glutamyl-L-glutamyl-L-tyrosyl-[tubulin] + H2O = C-terminal L-alpha-aminoacyl-L-glutamyl-L-glutamyl-[tubulin] + L-tyrosine. Its function is as follows. Tyrosine carboxypeptidase that removes the C-terminal tyrosine residue of alpha-tubulin, thereby regulating microtubule dynamics and function. Acts as an angiogenesis inhibitor: inhibits migration, proliferation and network formation by endothelial cells as well as angiogenesis. This inhibitory effect is selective to endothelial cells as it does not affect the migration of smooth muscle cells or fibroblasts. The sequence is that of Tubulinyl-Tyr carboxypeptidase 1 from Mus musculus (Mouse).